The primary structure comprises 476 residues: Glycogen synthase (476 aa).

Lys15 serves as a coordination point for ADP-alpha-D-glucose.

The protein belongs to the glycosyltransferase 1 family. Bacterial/plant glycogen synthase subfamily.

The enzyme catalyses [(1-&gt;4)-alpha-D-glucosyl](n) + ADP-alpha-D-glucose = [(1-&gt;4)-alpha-D-glucosyl](n+1) + ADP + H(+). It functions in the pathway glycan biosynthesis; glycogen biosynthesis. Functionally, synthesizes alpha-1,4-glucan chains using ADP-glucose. The chain is Glycogen synthase from Chlamydia pneumoniae (Chlamydophila pneumoniae).